A 418-amino-acid polypeptide reads, in one-letter code: Light-independent protochlorophyllide reductase subunit N (418 aa).

The [4Fe-4S] cluster site is built by Cys-17, Cys-42, and Cys-103.

This sequence belongs to the BchN/ChlN family. In terms of assembly, protochlorophyllide reductase is composed of three subunits; ChlL, ChlN and ChlB. Forms a heterotetramer of two ChlB and two ChlN subunits. [4Fe-4S] cluster is required as a cofactor.

The catalysed reaction is chlorophyllide a + oxidized 2[4Fe-4S]-[ferredoxin] + 2 ADP + 2 phosphate = protochlorophyllide a + reduced 2[4Fe-4S]-[ferredoxin] + 2 ATP + 2 H2O. Its pathway is porphyrin-containing compound metabolism; chlorophyll biosynthesis (light-independent). Component of the dark-operative protochlorophyllide reductase (DPOR) that uses Mg-ATP and reduced ferredoxin to reduce ring D of protochlorophyllide (Pchlide) to form chlorophyllide a (Chlide). This reaction is light-independent. The NB-protein (ChlN-ChlB) is the catalytic component of the complex. In Prochlorococcus marinus (strain MIT 9211), this protein is Light-independent protochlorophyllide reductase subunit N.